Reading from the N-terminus, the 338-residue chain is Purple acid phosphatase 17 (338 aa).

Residues 1-31 (MNSGRRSLMSATASLSLLLCIFTTFVVVSNG) form the signal peptide. Residue D53 participates in Fe cation binding. N-linked (GlcNAc...) asparagine glycosylation is present at N61. Positions 86 and 89 each coordinate Fe cation. D86 is a Zn(2+) binding site. The Zn(2+) site is built by N124 and H218. The active-site Proton donor is H227. A Zn(2+)-binding site is contributed by H253. Position 253–255 (253–255 (HDH)) interacts with substrate. Residue H255 coordinates Fe cation.

Belongs to the metallophosphoesterase superfamily. Purple acid phosphatase family. In terms of assembly, homodimer. Requires Fe cation as cofactor. Zn(2+) serves as cofactor. As to expression, expressed in roots, stems, leaves, flowers and siliques.

The protein resides in the secreted. It catalyses the reaction a phosphate monoester + H2O = an alcohol + phosphate. It carries out the reaction 2 a phenolic donor + H2O2 = 2 a phenolic radical donor + 2 H2O. Its activity is regulated as follows. Inhibited by phosphate and molybdate. Functionally, metallo-phosphoesterase involved in phosphate metabolism. Has a peroxidase activity. This is Purple acid phosphatase 17 (PAP17) from Arabidopsis thaliana (Mouse-ear cress).